A 156-amino-acid chain; its full sequence is MIQSQHSQTARHALAETVVLAKARKNLSFAQLTEGTGLSEAFVTAALLGQHALPVDAARNVADKLGLDDDAVLLLQSIPLRGSIDDRVPTDPTIYRFYEMLQVYGTTLKALVHEKFGDGIISAINFRLDVKKVDDPEGGSRAVITLDGKYLPTKPF.

Residues R96, E99, and S122 contribute to the active site.

Belongs to the cyanase family.

The enzyme catalyses cyanate + hydrogencarbonate + 3 H(+) = NH4(+) + 2 CO2. Its function is as follows. Catalyzes the reaction of cyanate with bicarbonate to produce ammonia and carbon dioxide. The sequence is that of Cyanate hydratase from Burkholderia lata (strain ATCC 17760 / DSM 23089 / LMG 22485 / NCIMB 9086 / R18194 / 383).